A 117-amino-acid polypeptide reads, in one-letter code: Large ribosomal subunit protein uL18 (117 aa).

It belongs to the universal ribosomal protein uL18 family. In terms of assembly, part of the 50S ribosomal subunit; part of the 5S rRNA/L5/L18/L25 subcomplex. Contacts the 5S and 23S rRNAs.

In terms of biological role, this is one of the proteins that bind and probably mediate the attachment of the 5S RNA into the large ribosomal subunit, where it forms part of the central protuberance. The chain is Large ribosomal subunit protein uL18 from Polynucleobacter necessarius subsp. necessarius (strain STIR1).